Consider the following 121-residue polypeptide: uncharacterized protein (121 aa).

Positions 1–19 are cleaved as a signal peptide; sequence MKKFALATIFALATTSAFA.

To E.coli YgiW.

The protein resides in the periplasm. This is an uncharacterized protein from Haemophilus influenzae (strain ATCC 51907 / DSM 11121 / KW20 / Rd).